The chain runs to 138 residues: Small ribosomal subunit protein uS9c (138 aa).

Belongs to the universal ribosomal protein uS9 family.

The protein resides in the plastid. It is found in the chloroplast. The protein is Small ribosomal subunit protein uS9c (rps9) of Trieres chinensis (Marine centric diatom).